The primary structure comprises 473 residues: Bifunctional protein HldE (473 aa).

Positions 1 to 318 are ribokinase; sequence MKLSMPRFDQ…RAIQREEGSE (318 aa). 194-197 is an ATP binding site; the sequence is NLSE. Asp263 is a catalytic residue. Positions 343-473 are cytidylyltransferase; the sequence is FTNGCFDILH…TAIVEKIRKN (131 aa).

This sequence in the N-terminal section; belongs to the carbohydrate kinase PfkB family. The protein in the C-terminal section; belongs to the cytidylyltransferase family. Homodimer.

The enzyme catalyses D-glycero-beta-D-manno-heptose 7-phosphate + ATP = D-glycero-beta-D-manno-heptose 1,7-bisphosphate + ADP + H(+). The catalysed reaction is D-glycero-beta-D-manno-heptose 1-phosphate + ATP + H(+) = ADP-D-glycero-beta-D-manno-heptose + diphosphate. Its pathway is nucleotide-sugar biosynthesis; ADP-L-glycero-beta-D-manno-heptose biosynthesis; ADP-L-glycero-beta-D-manno-heptose from D-glycero-beta-D-manno-heptose 7-phosphate: step 1/4. The protein operates within nucleotide-sugar biosynthesis; ADP-L-glycero-beta-D-manno-heptose biosynthesis; ADP-L-glycero-beta-D-manno-heptose from D-glycero-beta-D-manno-heptose 7-phosphate: step 3/4. In terms of biological role, catalyzes the phosphorylation of D-glycero-D-manno-heptose 7-phosphate at the C-1 position to selectively form D-glycero-beta-D-manno-heptose-1,7-bisphosphate. Catalyzes the ADP transfer from ATP to D-glycero-beta-D-manno-heptose 1-phosphate, yielding ADP-D-glycero-beta-D-manno-heptose. This chain is Bifunctional protein HldE, found in Pseudomonas putida (strain ATCC 47054 / DSM 6125 / CFBP 8728 / NCIMB 11950 / KT2440).